Consider the following 414-residue polypeptide: 3-oxoacyl-[acyl-carrier-protein] synthase 2 (414 aa).

The 411-residue stretch at 3–413 folds into the Ketosynthase family 3 (KS3) domain; sequence KRRVVVTGMG…GTNGSLIFKR (411 aa). Catalysis depends on for beta-ketoacyl synthase activity residues Cys-164, His-304, and His-342.

The protein belongs to the thiolase-like superfamily. Beta-ketoacyl-ACP synthases family. As to quaternary structure, homodimer.

It carries out the reaction a fatty acyl-[ACP] + malonyl-[ACP] + H(+) = a 3-oxoacyl-[ACP] + holo-[ACP] + CO2. The enzyme catalyses (9Z)-hexadecenoyl-[ACP] + malonyl-[ACP] + H(+) = 3-oxo-(11Z)-octadecenoyl-[ACP] + holo-[ACP] + CO2. It functions in the pathway lipid metabolism; fatty acid biosynthesis. Functionally, involved in the type II fatty acid elongation cycle. Catalyzes the elongation of a wide range of acyl-ACP by the addition of two carbons from malonyl-ACP to an acyl acceptor. Can efficiently catalyze the conversion of palmitoleoyl-ACP (cis-hexadec-9-enoyl-ACP) to cis-vaccenoyl-ACP (cis-octadec-11-enoyl-ACP), an essential step in the thermal regulation of fatty acid composition. The sequence is that of 3-oxoacyl-[acyl-carrier-protein] synthase 2 (fabF) from Vibrio cholerae serotype O1 (strain ATCC 39315 / El Tor Inaba N16961).